We begin with the raw amino-acid sequence, 125 residues long: Cu-Zn superoxide dismutase-like protein OPG175 (125 aa).

The cysteines at positions 52 and 102 are disulfide-linked.

This sequence belongs to the Cu-Zn superoxide dismutase family.

Its subcellular location is the virion. It localises to the host cytoplasm. Superoxide dismutase-like protein with no enzymatic activity. The polypeptide is Cu-Zn superoxide dismutase-like protein OPG175 (OPG175) (Cowpox virus (strain Brighton Red) (CPV)).